The following is a 386-amino-acid chain: NADH-ubiquinone oxidoreductase chain 4 (386 aa).

Transmembrane regions (helical) follow at residues 8-28 (SEFH…YFLF), 37-57 (WPLS…LTFT), 61-81 (FILF…LILG), 91-111 (ASYY…FIII), 133-153 (IFLL…AHIW), 167-187 (MVLA…VQVL), 189-209 (IYSE…SCLI), 219-239 (LIAY…LMSC), 247-267 (ILMM…SYLF), 283-303 (ISLF…NMGL), and 315-335 (FFIG…ILCF).

The protein belongs to the complex I subunit 4 family.

The protein resides in the mitochondrion membrane. It carries out the reaction a ubiquinone + NADH + 5 H(+)(in) = a ubiquinol + NAD(+) + 4 H(+)(out). Core subunit of the mitochondrial membrane respiratory chain NADH dehydrogenase (Complex I) that is believed to belong to the minimal assembly required for catalysis. Complex I functions in the transfer of electrons from NADH to the respiratory chain. The immediate electron acceptor for the enzyme is believed to be ubiquinone. The sequence is that of NADH-ubiquinone oxidoreductase chain 4 (ND4) from Artemia franciscana (Brine shrimp).